The following is a 379-amino-acid chain: Cobalt-precorrin-5B C(1)-methyltransferase (379 aa).

Belongs to the CbiD family.

It catalyses the reaction Co-precorrin-5B + S-adenosyl-L-methionine = Co-precorrin-6A + S-adenosyl-L-homocysteine. It functions in the pathway cofactor biosynthesis; adenosylcobalamin biosynthesis; cob(II)yrinate a,c-diamide from sirohydrochlorin (anaerobic route): step 6/10. Its function is as follows. Catalyzes the methylation of C-1 in cobalt-precorrin-5B to form cobalt-precorrin-6A. The protein is Cobalt-precorrin-5B C(1)-methyltransferase of Salmonella schwarzengrund (strain CVM19633).